Reading from the N-terminus, the 683-residue chain is Protein kinase C eta type (683 aa).

The region spanning M1–F118 is the C2 domain. Residues S28 and S32 each carry the phosphoserine modification. Phorbol-ester/DAG-type zinc fingers lie at residues G171–C222 and P245–C295. S317 is modified (phosphoserine). The Protein kinase domain occupies F355 to F614. ATP contacts are provided by residues L361–V369 and K384. D479 functions as the Proton acceptor in the catalytic mechanism. Phosphothreonine; by PDPK1 is present on T513. The AGC-kinase C-terminal domain maps to K615 to L683. T656 carries the phosphothreonine modification. S675 bears the Phosphoserine mark.

This sequence belongs to the protein kinase superfamily. AGC Ser/Thr protein kinase family. PKC subfamily. In terms of assembly, interacts with FYN. Interacts with RALA. Interacts with DGKQ. Predominantly expressed in lung and skin.

It localises to the cytoplasm. It catalyses the reaction L-seryl-[protein] + ATP = O-phospho-L-seryl-[protein] + ADP + H(+). It carries out the reaction L-threonyl-[protein] + ATP = O-phospho-L-threonyl-[protein] + ADP + H(+). With respect to regulation, novel PKCs (PRKCD, PRKCE, PRKCH and PRKCQ) are calcium-insensitive, but activated by diacylglycerol (DAG) and phosphatidylserine. Three specific sites; Thr-513 (activation loop of the kinase domain), Thr-656 (turn motif) and Ser-675 (hydrophobic region), need to be phosphorylated for its full activation. Its function is as follows. Calcium-independent, phospholipid- and diacylglycerol (DAG)-dependent serine/threonine-protein kinase that is involved in the regulation of cell differentiation in keratinocytes and pre-B cell receptor, mediates regulation of epithelial tight junction integrity and foam cell formation, and is required for glioblastoma proliferation and apoptosis prevention in MCF-7 cells. In keratinocytes, binds and activates the tyrosine kinase FYN, which in turn blocks epidermal growth factor receptor (EGFR) signaling and leads to keratinocyte growth arrest and differentiation. Associates with the cyclin CCNE1-CDK2-CDKN1B complex and inhibits CDK2 kinase activity, leading to RB1 dephosphorylation and thereby G1 arrest in keratinocytes. In association with RALA activates actin depolymerization, which is necessary for keratinocyte differentiation. In the pre-B cell receptor signaling, functions downstream of BLNK by up-regulating IRF4, which in turn activates L chain gene rearrangement. Regulates epithelial tight junctions (TJs) by phosphorylating occludin (OCLN) on threonine residues, which is necessary for the assembly and maintenance of TJs. In association with PLD2 and via TLR4 signaling, is involved in lipopolysaccharide (LPS)-induced RGS2 down-regulation and foam cell formation. Upon PMA stimulation, mediates glioblastoma cell proliferation by activating the mTOR pathway, the PI3K/AKT pathway and the ERK1-dependent phosphorylation of ELK1. Involved in the protection of glioblastoma cells from irradiation-induced apoptosis by preventing caspase-9 activation. In camptothecin-treated MCF-7 cells, regulates NF-kappa-B upstream signaling by activating IKBKB, and confers protection against DNA damage-induced apoptosis. Promotes oncogenic functions of ATF2 in the nucleus while blocking its apoptotic function at mitochondria. Phosphorylates ATF2 which promotes its nuclear retention and transcriptional activity and negatively regulates its mitochondrial localization. This Mus musculus (Mouse) protein is Protein kinase C eta type (Prkch).